Consider the following 555-residue polypeptide: Chaperonin GroEL (555 aa).

ATP contacts are provided by residues 29–32 (TLGP), Lys-50, 86–90 (DGTTT), Gly-418, and Asp-499. Positions 528–555 (HEEDNNTGNRSGGGVGGGHHGGMGGMDF) are disordered. Over residues 537 to 555 (RSGGGVGGGHHGGMGGMDF) the composition is skewed to gly residues.

It belongs to the chaperonin (HSP60) family. Forms a cylinder of 14 subunits composed of two heptameric rings stacked back-to-back. Interacts with the co-chaperonin GroES.

It is found in the cytoplasm. It catalyses the reaction ATP + H2O + a folded polypeptide = ADP + phosphate + an unfolded polypeptide.. Its function is as follows. Together with its co-chaperonin GroES, plays an essential role in assisting protein folding. The GroEL-GroES system forms a nano-cage that allows encapsulation of the non-native substrate proteins and provides a physical environment optimized to promote and accelerate protein folding. The polypeptide is Chaperonin GroEL (Orientia tsutsugamushi (Rickettsia tsutsugamushi)).